A 97-amino-acid chain; its full sequence is Putative pterin-4-alpha-carbinolamine dehydratase (97 aa).

The protein belongs to the pterin-4-alpha-carbinolamine dehydratase family.

The catalysed reaction is (4aS,6R)-4a-hydroxy-L-erythro-5,6,7,8-tetrahydrobiopterin = (6R)-L-erythro-6,7-dihydrobiopterin + H2O. This Opitutus terrae (strain DSM 11246 / JCM 15787 / PB90-1) protein is Putative pterin-4-alpha-carbinolamine dehydratase.